Here is a 464-residue protein sequence, read N- to C-terminus: Bifunctional protein GlmU (464 aa).

A pyrophosphorylase region spans residues 1 to 232 (MKHDELAAVI…ADEAMGINDR (232 aa)). Residues 11 to 14 (LAAG), lysine 25, glutamine 76, and 81 to 82 (GT) contribute to the UDP-N-acetyl-alpha-D-glucosamine site. Aspartate 106 is a Mg(2+) binding site. Residues glycine 143, glutamate 157, asparagine 172, and asparagine 230 each coordinate UDP-N-acetyl-alpha-D-glucosamine. Asparagine 230 lines the Mg(2+) pocket. The linker stretch occupies residues 233-253 (VQLAQASALMRRRINENLMRA). The N-acetyltransferase stretch occupies residues 254–464 (GVSFIDPEQT…RHDPKCKNKD (211 aa)). UDP-N-acetyl-alpha-D-glucosamine is bound by residues arginine 336 and lysine 354. Residue histidine 366 is the Proton acceptor of the active site. UDP-N-acetyl-alpha-D-glucosamine-binding residues include tyrosine 369 and asparagine 380. Residues 389 to 390 (NY), serine 408, alanine 426, and arginine 443 contribute to the acetyl-CoA site.

It in the N-terminal section; belongs to the N-acetylglucosamine-1-phosphate uridyltransferase family. The protein in the C-terminal section; belongs to the transferase hexapeptide repeat family. In terms of assembly, homotrimer. Mg(2+) serves as cofactor.

The protein resides in the cytoplasm. It catalyses the reaction alpha-D-glucosamine 1-phosphate + acetyl-CoA = N-acetyl-alpha-D-glucosamine 1-phosphate + CoA + H(+). The enzyme catalyses N-acetyl-alpha-D-glucosamine 1-phosphate + UTP + H(+) = UDP-N-acetyl-alpha-D-glucosamine + diphosphate. It participates in nucleotide-sugar biosynthesis; UDP-N-acetyl-alpha-D-glucosamine biosynthesis; N-acetyl-alpha-D-glucosamine 1-phosphate from alpha-D-glucosamine 6-phosphate (route II): step 2/2. It functions in the pathway nucleotide-sugar biosynthesis; UDP-N-acetyl-alpha-D-glucosamine biosynthesis; UDP-N-acetyl-alpha-D-glucosamine from N-acetyl-alpha-D-glucosamine 1-phosphate: step 1/1. Its pathway is bacterial outer membrane biogenesis; LPS lipid A biosynthesis. In terms of biological role, catalyzes the last two sequential reactions in the de novo biosynthetic pathway for UDP-N-acetylglucosamine (UDP-GlcNAc). The C-terminal domain catalyzes the transfer of acetyl group from acetyl coenzyme A to glucosamine-1-phosphate (GlcN-1-P) to produce N-acetylglucosamine-1-phosphate (GlcNAc-1-P), which is converted into UDP-GlcNAc by the transfer of uridine 5-monophosphate (from uridine 5-triphosphate), a reaction catalyzed by the N-terminal domain. The polypeptide is Bifunctional protein GlmU (Syntrophotalea carbinolica (strain DSM 2380 / NBRC 103641 / GraBd1) (Pelobacter carbinolicus)).